The chain runs to 406 residues: Putative competence-damage inducible protein (406 aa).

The protein belongs to the CinA family.

This is Putative competence-damage inducible protein from Natranaerobius thermophilus (strain ATCC BAA-1301 / DSM 18059 / JW/NM-WN-LF).